We begin with the raw amino-acid sequence, 631 residues long: Transcription factor dibT (631 aa).

The zn(2)-C6 fungal-type DNA-binding region spans 11–38 (CWTCRLRRKRCDSVQPVCGSCQSLEITC). Residues 123–144 (SLADSSASTPSTSSGRPTTLRS) are compositionally biased toward low complexity. 2 disordered regions span residues 123–148 (SLAD…SVDR) and 469–488 (GLKD…TSAG).

It localises to the nucleus. Functionally, transcription factor; part of the gene cluster that mediates the biosynthesis of pestalotiollide B which is part of dibenzodioxocinones, a novel class of inhibitors against cholesterol ester transfer protein (CEPT). Acts as the key transcription factor within the cluster and positively regulates the expression of the cluster genes and the subsequent production of dibenzodioxocinones such as pestalotiollide B, pestalotiollide C, 1',2'-dehydropenicillide, 3'-methoxy-1',2'-dehydropenicillide and 1',2'-epoxy-3',4'-didehydropenicillide. Required for the expression of most PKS genes outside of the dibenzodioxocinones cluster, (43 out of 48 defined PKS genes), and promotes pigmentation of the mycelium and conidia. This chain is Transcription factor dibT, found in Pestalotiopsis microspora.